A 98-amino-acid chain; its full sequence is Large ribosomal subunit protein bL25 (98 aa).

The tract at residues 1–23 (MANFVLNAQARAEDKQGKGASRR) is disordered.

It belongs to the bacterial ribosomal protein bL25 family. As to quaternary structure, part of the 50S ribosomal subunit; part of the 5S rRNA/L5/L18/L25 subcomplex. Contacts the 5S rRNA. Binds to the 5S rRNA independently of L5 and L18.

Functionally, this is one of the proteins that binds to the 5S RNA in the ribosome where it forms part of the central protuberance. The sequence is that of Large ribosomal subunit protein bL25 from Acinetobacter baumannii (strain ATCC 17978 / DSM 105126 / CIP 53.77 / LMG 1025 / NCDC KC755 / 5377).